Here is a 590-residue protein sequence, read N- to C-terminus: ATP-dependent zinc metalloprotease FtsH 1 (590 aa).

Residues 1-8 (MLKLTKKQ) lie on the Cytoplasmic side of the membrane. A helical membrane pass occupies residues 9–29 (LIIVLGIAIVVVSAIGYAVYT). Residues 30–103 (QYFNEDKLEI…QVRETTDQYS (74 aa)) are Extracellular-facing. The chain crosses the membrane as a helical span at residues 104 to 124 (VVQVITFVVLIGGFIGVAIFL). Residues 125–590 (SKKNATQTSK…NEIFSGFQSM (466 aa)) are Cytoplasmic-facing. 195–202 (GSPGTGKT) contacts ATP. Residue His-418 coordinates Zn(2+). Glu-419 is an active-site residue. The Zn(2+) site is built by His-422 and Asp-496.

In the central section; belongs to the AAA ATPase family. The protein in the C-terminal section; belongs to the peptidase M41 family. As to quaternary structure, homohexamer. Zn(2+) is required as a cofactor.

The protein localises to the cell membrane. Functionally, acts as a processive, ATP-dependent zinc metallopeptidase for both cytoplasmic and membrane proteins. Plays a role in the quality control of integral membrane proteins. The chain is ATP-dependent zinc metalloprotease FtsH 1 from Alkaliphilus metalliredigens (strain QYMF).